The primary structure comprises 402 residues: Zinc finger protein 322 (402 aa).

A C2H2-type 1; atypical zinc finger spans residues 43–65 (YQCLECKQNFCENLALIMCERTH). C2H2-type zinc fingers lie at residues 71–93 (YKCD…QRIH), 99–121 (YKCS…QRTH), 127–149 (YTCD…QRSH), 155–177 (YLCS…RRTH), 183–205 (FKCL…QRTH), 211–233 (YKCN…KRVH), 239–261 (YKCG…QRVH), and 267–289 (YKCL…QATH). Residues 293-315 (FKCLEYEKSFNCSSDLIVHQRIH) form a C2H2-type 10; degenerate zinc finger. A C2H2-type 11; degenerate zinc finger spans residues 351-373 (YKYTVCDKSFHQSSALLQHQTVH). S391 carries the post-translational modification Phosphoserine.

This sequence belongs to the krueppel C2H2-type zinc-finger protein family. Interacts with POU5F1.

The protein localises to the cytoplasm. It localises to the nucleus. In terms of biological role, transcriptional activator. Important for maintenance of pluripotency in embryonic stem cells. Binds directly to the POU5F1 distal enhancer and the NANOG proximal promoter, and enhances expression of both genes. Can also bind to numerous other gene promoters and regulates expression of many other pluripotency factors, either directly or indirectly. Promotes inhibition of MAPK signaling during embryonic stem cell differentiation. The chain is Zinc finger protein 322 (ZNF322) from Macaca fascicularis (Crab-eating macaque).